We begin with the raw amino-acid sequence, 90 residues long: Accessory gland-specific peptide 26Ab (90 aa).

Residues 1-21 (MNYFAVLCIFSCICFWQFSDA) form the signal peptide.

Main cells of the accessory glands of males.

Its subcellular location is the secreted. It is found in the extracellular space. Functionally, this protein is transferred from male to female during mating and may affect egglaying and behavior after mating. The polypeptide is Accessory gland-specific peptide 26Ab (Acp26Ab) (Drosophila simulans (Fruit fly)).